The following is a 177-amino-acid chain: Large ribosomal subunit protein uL6 (177 aa).

The protein belongs to the universal ribosomal protein uL6 family. In terms of assembly, part of the 50S ribosomal subunit.

Its function is as follows. This protein binds to the 23S rRNA, and is important in its secondary structure. It is located near the subunit interface in the base of the L7/L12 stalk, and near the tRNA binding site of the peptidyltransferase center. This Chromobacterium violaceum (strain ATCC 12472 / DSM 30191 / JCM 1249 / CCUG 213 / NBRC 12614 / NCIMB 9131 / NCTC 9757 / MK) protein is Large ribosomal subunit protein uL6.